Here is a 389-residue protein sequence, read N- to C-terminus: Transaldolase (389 aa).

Lysine 136 functions as the Schiff-base intermediate with substrate in the catalytic mechanism. 2 EF-hand domains span residues 330 to 365 (ALNQ…FDAI) and 365 to 388 (IDLN…VSKL). Residues aspartate 343, aspartate 345, aspartate 347, glutamate 354, aspartate 366, asparagine 368, aspartate 370, lysine 372, and glutamate 377 each coordinate Ca(2+).

It belongs to the transaldolase family. Type 1 subfamily.

The protein localises to the cytoplasm. The enzyme catalyses D-sedoheptulose 7-phosphate + D-glyceraldehyde 3-phosphate = D-erythrose 4-phosphate + beta-D-fructose 6-phosphate. It functions in the pathway carbohydrate degradation; pentose phosphate pathway; D-glyceraldehyde 3-phosphate and beta-D-fructose 6-phosphate from D-ribose 5-phosphate and D-xylulose 5-phosphate (non-oxidative stage): step 2/3. In terms of biological role, transaldolase is important for the balance of metabolites in the pentose-phosphate pathway. The chain is Transaldolase from Gloeobacter violaceus (strain ATCC 29082 / PCC 7421).